A 321-amino-acid polypeptide reads, in one-letter code: Lipoyl synthase (321 aa).

The tract at residues 1–21 (MRHRWEDRPVAPPPDGRPTEY) is disordered. [4Fe-4S] cluster-binding residues include C63, C68, C74, C89, C93, C96, and S302. The Radical SAM core domain maps to 75–291 (WNNRTATFMI…KKLGLEMGFS (217 aa)). Positions 301 to 321 (SSYHAHEQTEDARRGALGARG) are disordered. The span at 304 to 314 (HAHEQTEDARR) shows a compositional bias: basic and acidic residues.

It belongs to the radical SAM superfamily. Lipoyl synthase family. It depends on [4Fe-4S] cluster as a cofactor.

The protein localises to the cytoplasm. It catalyses the reaction [[Fe-S] cluster scaffold protein carrying a second [4Fe-4S](2+) cluster] + N(6)-octanoyl-L-lysyl-[protein] + 2 oxidized [2Fe-2S]-[ferredoxin] + 2 S-adenosyl-L-methionine + 4 H(+) = [[Fe-S] cluster scaffold protein] + N(6)-[(R)-dihydrolipoyl]-L-lysyl-[protein] + 4 Fe(3+) + 2 hydrogen sulfide + 2 5'-deoxyadenosine + 2 L-methionine + 2 reduced [2Fe-2S]-[ferredoxin]. The protein operates within protein modification; protein lipoylation via endogenous pathway; protein N(6)-(lipoyl)lysine from octanoyl-[acyl-carrier-protein]: step 2/2. Functionally, catalyzes the radical-mediated insertion of two sulfur atoms into the C-6 and C-8 positions of the octanoyl moiety bound to the lipoyl domains of lipoate-dependent enzymes, thereby converting the octanoylated domains into lipoylated derivatives. The polypeptide is Lipoyl synthase (Rubrobacter xylanophilus (strain DSM 9941 / JCM 11954 / NBRC 16129 / PRD-1)).